Reading from the N-terminus, the 416-residue chain is Gamma-glutamyl phosphate reductase (416 aa).

The protein belongs to the gamma-glutamyl phosphate reductase family.

The protein resides in the cytoplasm. The enzyme catalyses L-glutamate 5-semialdehyde + phosphate + NADP(+) = L-glutamyl 5-phosphate + NADPH + H(+). It functions in the pathway amino-acid biosynthesis; L-proline biosynthesis; L-glutamate 5-semialdehyde from L-glutamate: step 2/2. Catalyzes the NADPH-dependent reduction of L-glutamate 5-phosphate into L-glutamate 5-semialdehyde and phosphate. The product spontaneously undergoes cyclization to form 1-pyrroline-5-carboxylate. The polypeptide is Gamma-glutamyl phosphate reductase (Salmonella paratyphi C (strain RKS4594)).